A 216-amino-acid chain; its full sequence is MTENEKHLYVARLDAAAEGFGLPKNDQAWSKLLDYLALLQKWNKTYNLTAIRDVDEMFIKHILDSLSVAPYIDSERLIDVGTGGGLPGIPLAILFPERQVDLLDSNSKKTRFLVQAKAELGLKNVEVVHHRVEAYHPETLYDGVVSRAFASLDDMLNWTHHLLKPQGHWWAMKAQKTQDEVAQLPNFAKMSQVFELHVPSLDAERTLIKIEKCQET.

S-adenosyl-L-methionine is bound by residues G81, L86, 132 to 133 (VE), and R147.

This sequence belongs to the methyltransferase superfamily. RNA methyltransferase RsmG family.

The protein localises to the cytoplasm. It carries out the reaction guanosine(527) in 16S rRNA + S-adenosyl-L-methionine = N(7)-methylguanosine(527) in 16S rRNA + S-adenosyl-L-homocysteine. Functionally, specifically methylates the N7 position of guanine in position 527 of 16S rRNA. This Hydrogenovibrio crunogenus (strain DSM 25203 / XCL-2) (Thiomicrospira crunogena) protein is Ribosomal RNA small subunit methyltransferase G.